A 245-amino-acid polypeptide reads, in one-letter code: Bis(5'-nucleosyl)-tetraphosphatase PrpE [asymmetrical] (245 aa).

Belongs to the PrpE family. Ni(2+) serves as cofactor.

It catalyses the reaction P(1),P(4)-bis(5'-guanosyl) tetraphosphate + H2O = GMP + GTP + 2 H(+). Asymmetrically hydrolyzes Ap4p to yield AMP and ATP. The polypeptide is Bis(5'-nucleosyl)-tetraphosphatase PrpE [asymmetrical] (Geobacillus thermodenitrificans (strain NG80-2)).